A 165-amino-acid chain; its full sequence is Nucleoside-triphosphatase THEP1 (165 aa).

ATP contacts are provided by residues 7–14 (GRPGVGKT) and 93–100 (LVIIDEVG).

It belongs to the THEP1 NTPase family.

The enzyme catalyses a ribonucleoside 5'-triphosphate + H2O = a ribonucleoside 5'-diphosphate + phosphate + H(+). Its function is as follows. Has nucleotide phosphatase activity towards ATP, GTP, CTP, TTP and UTP. May hydrolyze nucleoside diphosphates with lower efficiency. The polypeptide is Nucleoside-triphosphatase THEP1 (Archaeoglobus fulgidus (strain ATCC 49558 / DSM 4304 / JCM 9628 / NBRC 100126 / VC-16)).